Reading from the N-terminus, the 476-residue chain is Zinc finger protein 563 (476 aa).

In terms of domain architecture, KRAB spans 4–96; that stretch reads VAFEDVAVNF…IRDSIVNNSI (93 aa). The segment at 101–125 adopts a C2H2-type 1; degenerate zinc-finger fold; the sequence is DPCQSAECEEVIMGHLSLNSHIRVD. The C2H2-type 2; degenerate zinc finger occupies 169–191; sequence YECKECGKTFSSRRNLRRHMVVQ. C2H2-type zinc fingers lie at residues 197-219, 225-247, 253-275, 281-303, 309-331, 337-359, 365-387, 393-415, 421-443, and 449-471; these read YKCK…ERTH, YECK…ERMH, YECK…ERTH, YTCK…ETTH, YECK…MKRH, HKCK…ERIH, YECK…MIMH, HKCK…EKSH, YECK…MVMH, and NKCK…EKTH.

It belongs to the krueppel C2H2-type zinc-finger protein family.

Its subcellular location is the nucleus. Its function is as follows. May be involved in transcriptional regulation. The sequence is that of Zinc finger protein 563 (ZNF563) from Homo sapiens (Human).